Consider the following 472-residue polypeptide: MSAAALKVTTESRPGSRLAVTVTVPAERTKTSYEDAINSLSRSINLPGFRKGKVPRTVVIQQLGAVRIKASALETMVDGAWRDAIQQESLEPISQPELSGGFEGLLDSFTPGEAVTITLEADVAPTPKLKSTKGLKASFEPVAYDAAKVDEMLEDSRKQLATVVPVEGRAAEQGDIAVLGFKGTYSDDGSEIEGGSADSMDVDLEHGRMIPGFIEGVIGMAVGDSKTVDCQFPDDYPKEDARGRKAAFEIELKDLKTRELPELNDAFAKQASEQETLAELRQELEQRLKDDAERRQTSNRRDALIGALVEQLEVELPEALIQQESRNLLEQTAAQFAQQGMDVKSLFTPDLVRNLMQNSRPEAEERLRRSFALTALAEAEGISVEDDAVDAKIKEVKKELAADAKIDPQRLRQAVMDDLIQEQLMSWLEENSTLTEQAPAADDADDAEKPAAKKKPAAKKKTPAKSKTDAEA.

One can recognise a PPIase FKBP-type domain in the interval 174–261; sequence GDIAVLGFKG…LKDLKTRELP (88 aa). The disordered stretch occupies residues 430-472; the sequence is ENSTLTEQAPAADDADDAEKPAAKKKPAAKKKTPAKSKTDAEA. Positions 452 to 464 are enriched in basic residues; sequence AKKKPAAKKKTPA.

This sequence belongs to the FKBP-type PPIase family. Tig subfamily.

It localises to the cytoplasm. It carries out the reaction [protein]-peptidylproline (omega=180) = [protein]-peptidylproline (omega=0). Involved in protein export. Acts as a chaperone by maintaining the newly synthesized protein in an open conformation. Functions as a peptidyl-prolyl cis-trans isomerase. The polypeptide is Trigger factor (Parasynechococcus marenigrum (strain WH8102)).